The primary structure comprises 318 residues: tRNA(Ile)-lysidine synthase (318 aa).

26-31 (SGGADS) is a binding site for ATP.

The protein belongs to the tRNA(Ile)-lysidine synthase family.

It localises to the cytoplasm. It carries out the reaction cytidine(34) in tRNA(Ile2) + L-lysine + ATP = lysidine(34) in tRNA(Ile2) + AMP + diphosphate + H(+). Functionally, ligates lysine onto the cytidine present at position 34 of the AUA codon-specific tRNA(Ile) that contains the anticodon CAU, in an ATP-dependent manner. Cytidine is converted to lysidine, thus changing the amino acid specificity of the tRNA from methionine to isoleucine. The chain is tRNA(Ile)-lysidine synthase from Nocardia farcinica (strain IFM 10152).